A 210-amino-acid polypeptide reads, in one-letter code: Large ribosomal subunit protein uL3 (210 aa).

Over residues Asn-131–Ser-140 the composition is skewed to polar residues. A disordered region spans residues Asn-131–Arg-150. Position 151 is an N5-methylglutamine (Gln-151).

It belongs to the universal ribosomal protein uL3 family. In terms of assembly, part of the 50S ribosomal subunit. Forms a cluster with proteins L14 and L19. In terms of processing, methylated by PrmB.

Its function is as follows. One of the primary rRNA binding proteins, it binds directly near the 3'-end of the 23S rRNA, where it nucleates assembly of the 50S subunit. This is Large ribosomal subunit protein uL3 from Acidithiobacillus ferrooxidans (strain ATCC 23270 / DSM 14882 / CIP 104768 / NCIMB 8455) (Ferrobacillus ferrooxidans (strain ATCC 23270)).